Here is a 147-residue protein sequence, read N- to C-terminus: Small ribosomal subunit protein bS18 (147 aa).

It belongs to the bacterial ribosomal protein bS18 family. As to quaternary structure, part of the 30S ribosomal subunit. Forms a tight heterodimer with protein bS6.

Binds as a heterodimer with protein bS6 to the central domain of the 16S rRNA, where it helps stabilize the platform of the 30S subunit. This is Small ribosomal subunit protein bS18 from Dehalococcoides mccartyi (strain ATCC BAA-2100 / JCM 16839 / KCTC 5957 / BAV1).